A 552-amino-acid chain; its full sequence is CTP synthase (552 aa).

The interval 1–270 is amidoligase domain; sequence MTKFVFVTGG…DGLICDKLRL (270 aa). Ser13 is a binding site for CTP. Ser13 provides a ligand contact to UTP. ATP-binding positions include 14–19 and Asp71; that span reads SLGKGI. Residues Asp71 and Glu144 each contribute to the Mg(2+) site. CTP contacts are provided by residues 151 to 153, 191 to 196, and Lys227; these read DIE and KTKPTQ. UTP is bound by residues 191 to 196 and Lys227; that span reads KTKPTQ. Positions 295–548 constitute a Glutamine amidotransferase type-1 domain; sequence QIAMVGKYVE…IKAAVEHQKP (254 aa). Gly357 is an L-glutamine binding site. The active-site Nucleophile; for glutamine hydrolysis is Cys384. L-glutamine contacts are provided by residues 385 to 388 and Glu408; that span reads LGMQ. Residues 432–451 form a disordered region; it reads KTRSENSDLGGTMRLGAQSS. Arg474 lines the L-glutamine pocket. Catalysis depends on residues His521 and Glu523.

The protein belongs to the CTP synthase family. In terms of assembly, homotetramer.

It carries out the reaction UTP + L-glutamine + ATP + H2O = CTP + L-glutamate + ADP + phosphate + 2 H(+). The enzyme catalyses L-glutamine + H2O = L-glutamate + NH4(+). It catalyses the reaction UTP + NH4(+) + ATP = CTP + ADP + phosphate + 2 H(+). Its pathway is pyrimidine metabolism; CTP biosynthesis via de novo pathway; CTP from UDP: step 2/2. Its activity is regulated as follows. Allosterically activated by GTP, when glutamine is the substrate; GTP has no effect on the reaction when ammonia is the substrate. The allosteric effector GTP functions by stabilizing the protein conformation that binds the tetrahedral intermediate(s) formed during glutamine hydrolysis. Inhibited by the product CTP, via allosteric rather than competitive inhibition. In terms of biological role, catalyzes the ATP-dependent amination of UTP to CTP with either L-glutamine or ammonia as the source of nitrogen. Regulates intracellular CTP levels through interactions with the four ribonucleotide triphosphates. This is CTP synthase from Acidovorax sp. (strain JS42).